The following is a 500-amino-acid chain: L-arabinose isomerase (500 aa).

Residues glutamate 306, glutamate 333, histidine 350, and histidine 450 each contribute to the Mn(2+) site.

This sequence belongs to the arabinose isomerase family. Homohexamer. Requires Mn(2+) as cofactor.

It catalyses the reaction beta-L-arabinopyranose = L-ribulose. Its pathway is carbohydrate degradation; L-arabinose degradation via L-ribulose; D-xylulose 5-phosphate from L-arabinose (bacterial route): step 1/3. Catalyzes the conversion of L-arabinose to L-ribulose. This chain is L-arabinose isomerase, found in Yersinia pestis (strain Pestoides F).